Reading from the N-terminus, the 97-residue chain is MSDWFRQAANGCITLTLHIQPGAKKSEFAGLHGDALKIRLAAPPVDGKANEALIRFIADALGLAKSAVHLKSGQTSRRKVLEILGTSTTTIAGLADR.

It belongs to the UPF0235 family.

This is UPF0235 protein Daro_3887 from Dechloromonas aromatica (strain RCB).